The sequence spans 205 residues: uncharacterized protein (205 aa).

The HD domain occupies 26–129 (DWHHVSRVAD…VQDADRLDAI (104 aa)).

This is an uncharacterized protein from Bacillus subtilis (strain 168).